Consider the following 178-residue polypeptide: CASP-like protein 5B1 (178 aa).

Residues methionine 1–threonine 37 are Cytoplasmic-facing. Residues isoleucine 38 to methionine 58 form a helical membrane-spanning segment. The Extracellular portion of the chain corresponds to valine 59 to alanine 69. An N-linked (GlcNAc...) asparagine glycan is attached at asparagine 66. The helical transmembrane segment at phenylalanine 70–leucine 90 threads the bilayer. The Cytoplasmic segment spans residues aspartate 91–serine 104. A helical transmembrane segment spans residues valine 105–alanine 125. At cysteine 126–alanine 154 the chain is on the extracellular side. The chain crosses the membrane as a helical span at residues alanine 155–tryptophan 175. Residues alanine 176–glutamate 178 are Cytoplasmic-facing.

Belongs to the Casparian strip membrane proteins (CASP) family. As to quaternary structure, homodimer and heterodimers.

Its subcellular location is the cell membrane. The protein is CASP-like protein 5B1 of Ginkgo biloba (Ginkgo).